Reading from the N-terminus, the 150-residue chain is D-aminoacyl-tRNA deacylase (150 aa).

Residues 140 to 141 carry the Gly-cisPro motif, important for rejection of L-amino acids motif; the sequence is GP.

Belongs to the DTD family. In terms of assembly, homodimer.

It localises to the cytoplasm. The enzyme catalyses glycyl-tRNA(Ala) + H2O = tRNA(Ala) + glycine + H(+). The catalysed reaction is a D-aminoacyl-tRNA + H2O = a tRNA + a D-alpha-amino acid + H(+). Its function is as follows. An aminoacyl-tRNA editing enzyme that deacylates mischarged D-aminoacyl-tRNAs. Also deacylates mischarged glycyl-tRNA(Ala), protecting cells against glycine mischarging by AlaRS. Acts via tRNA-based rather than protein-based catalysis; rejects L-amino acids rather than detecting D-amino acids in the active site. By recycling D-aminoacyl-tRNA to D-amino acids and free tRNA molecules, this enzyme counteracts the toxicity associated with the formation of D-aminoacyl-tRNA entities in vivo and helps enforce protein L-homochirality. This is D-aminoacyl-tRNA deacylase (DTD1) from Kluyveromyces lactis (strain ATCC 8585 / CBS 2359 / DSM 70799 / NBRC 1267 / NRRL Y-1140 / WM37) (Yeast).